The sequence spans 1844 residues: MAFQLALDALAPTTHRDPSLHPILESTVDSIRSSIQTYPWSIPKELLPLLNSYGIPTSGLGTSHHPHAAHKTIETFLLCTHWSFQATTPSSVMFMKPSKFNKLAQVNSNFRELKNYRLHPNDSTRYPFTSPDLPVFPTIFMHDALMYYHPSQIMDLFLRKPNLERLYASLVVPPEAHLSDQSFYPKLYTYTTTRHTLHYVPEGHEAGSYNQPSDAHSWLRINSIRLGNHHLSVTILESWGPVHSLLIQRGTPPPDPSLQAPPTLMASDLFRSYQEPRLDVVSFRIPDAIELPQATFLQQPLRDRLVPRAVYNALFTYTRAVRTLRTSDPAAFVRMHSSKPDHDWVTSNAWDNLQTFALLNVPLRPNVVYHVLQSPIASLSLYLRQHWRRLTATAVPILSFLTLLQRFLPLPIPLAEVKSITAFRRELYRKKEPHHPLDVFHLQHRIRNYHSAISAVRPASPPHQKLPHALQKAALLLLRPISPLLTATPFFRSEQKSMLPNAELSWTLKRFALPWQASLVLLALSESSILLHKLFSPPTLQAQHDTYHRHLHPGSYSLQWERTPLSIPRTTAFLPFTPTTSTAPPDRSEASLPPAFASTFVPRPPPAASSPGAQPPTTTAAPPTPIEPTQRAHQNSDLALESSTSTEPPPPPIRSPDMTPSAPVLFPEINSPRRFPPQLPATPDLEPAHTPPPLSIPHQDPTDSVDPLMGSHLLHHSLPAPPTHPLPSSQLLPAPLTNDPTAIGPVLPFEELHPRRYPENTATFLTRLRSLPSNHLPQPTLNCLLSAVSDQTKVSEEHLWESLQTILPDSQLSNEETNTLGLSTEHLTALAHLYNFQATVYSDRGPILFGPSDTIKRIDITHTTGPPSHFSPGKRLLGSQPSAKGHPSDPLIRAMKSFKVSGNYLPFSEAHNHPTSISHAKNLISNMKNGFDGVLSLLDVSTGQRTGPTPKERIIQIDHYLDTNPGKTTPVVHFAGFAGCGKTYPIQQLLKTKLFKDFRVSCPTTELRTEWKTAMELHGSQSWRFNTWESSILKSSRILVIDEIYKMPRGYLDLSILADPALELVIILGDPLQGEYHSQSKDSSNHRLPSETLRLLPYIDMYCWWSYRIPQCIARLFQIHSFNAWQGVIGSVSTPHDQSPVLTNSHASSLTFNSLGYRSCTISSSQGLTFCDPAIIVLDNYTKWLSSANGLVALTRSRSGVQFMGPSSYVGGTNGSSAMFSDAFNNSLIIMDRYFPSLFPQLKLITSPLTTRGPKLNGATPSASPTHRSPNFHLPPHIPLSYDRDFVTVNSTLPDQGPETRLDTHFLPPSRLPLHFDLPPAITPPPVSTSVDPPQAKASPVYPGEFFDSLAAFFLPAHDPSTREILHKDQSSNQFPWFDRPFSLSCQPSSLISAKHAPNHDPTLLPASINKRLRFRPSDSPHQITADDVVLGLQLFHSLCRAYSRQPNSTVPFNPELFAECISLNEYAQLSSKTQSTIVANASRSDPDWRHTTVKIFAKAQHKVNDGSIFGSWKACQTLALMHDYVILVLGPVKKYQRIFDNADRPPNIYSHCGKTPNQLRDWCQEHLTHSTPKIANDYTAFDQSQHGESVVLEALKMKRLNIPSHLIQLHVHLKTNVSTQFGPLTCMRLTGEPGTYDDNTDYNLAVIYSQYDVGSCPIMVSGDDSLIDHPLPTRHDWPSVLKRLHLRFKLELTSHPLFCGYYVGPAGCIRNPLALFCKLMIAVDDDALDDRRLSYLTEFTTGHLLGESLWHLLPETHVQYQSACFDFFCRRCPRHEKMLLDDSTPALSLLERITSSPRWLTKNAMYLLPAKLRLAITSLSQTQSFPESIEVSHAESELLHYVQ.

An Alphavirus-like MT domain is found at 58 to 219; that stretch reads SGLGTSHHPH…NQPSDAHSWL (162 aa). The segment at 571-729 is disordered; it reads TAFLPFTPTT…APPTHPLPSS (159 aa). The segment covering 609–621 has biased composition (low complexity); the sequence is SSPGAQPPTTTAA. The OTU domain maps to 728-879; it reads SSQLLPAPLT…FSPGKRLLGS (152 aa). One can recognise a Peptidase C21 domain in the interval 730–884; the sequence is QLLPAPLTND…RLLGSQPSAK (155 aa). The active-site For protease activity is Cys783. The disordered stretch occupies residues 859 to 887; the sequence is DITHTTGPPSHFSPGKRLLGSQPSAKGHP. Positions 865–867 match the GPP flap motif; that stretch reads GPP. His869 serves as the catalytic For protease activity. One can recognise a (+)RNA virus helicase ATP-binding domain in the interval 946-1103; the sequence is TGPTPKERII…RLLPYIDMYC (158 aa). A ribonucleoside 5'-triphosphate is bound at residue 976–983; sequence GFAGCGKT. One can recognise a (+)RNA virus helicase C-terminal domain in the interval 1104–1236; the sequence is WWSYRIPQCI…SLIIMDRYFP (133 aa). Residues 1572 to 1678 enclose the RdRp catalytic domain; that stretch reads TPKIANDYTA…DHPLPTRHDW (107 aa).

The protein belongs to the Tymoviridae non-structural replication polyprotein family. In terms of assembly, interacts with host ubiquitin. Post-translationally, specific enzymatic cleavages by the host yield mature proteins.

The protein localises to the host chloroplast envelope. The enzyme catalyses Thiol-dependent hydrolysis of ester, thioester, amide, peptide and isopeptide bonds formed by the C-terminal Gly of ubiquitin (a 76-residue protein attached to proteins as an intracellular targeting signal).. It catalyses the reaction RNA(n) + a ribonucleoside 5'-triphosphate = RNA(n+1) + diphosphate. In terms of biological role, acts as a cysteine protease, methyltransferase and deubiquitinase. The cysteine protease activity cleaves the polyprotein giving rise to mature proteins. The protease has the ability to process substrates in trans. The methyltransferase domain is probably involved in viral RNA capping. The deubiquitylating activity counteracts the degradation of the viral polymerase mediated by the host ubiquitin-proteasome system. The polymerase is thus stabilized and infectivity is increased. Favors K63 poly-Ub linkage. Functionally, RNA-directed RNA polymerase is responsible for the replication and transcription of the genome. This Brassica protein is Non-structural replication polyprotein.